The primary structure comprises 453 residues: GTPase Der (453 aa).

EngA-type G domains are found at residues 3 to 167 (FTLA…PAQT) and 187 to 360 (IKVA…AVWN). Residues 9-16 (GRPNVGKS), 56-60 (DTAGL), 119-122 (NKSE), 193-200 (GRPNAGKS), 240-244 (DTAGL), and 305-308 (NKSD) contribute to the GTP site. The region spanning 361 to 445 (TRIPTNPLNR…PIRLTLREKG (85 aa)) is the KH-like domain.

It belongs to the TRAFAC class TrmE-Era-EngA-EngB-Septin-like GTPase superfamily. EngA (Der) GTPase family. In terms of assembly, associates with the 50S ribosomal subunit.

In terms of biological role, GTPase that plays an essential role in the late steps of ribosome biogenesis. The polypeptide is GTPase Der (Azorhizobium caulinodans (strain ATCC 43989 / DSM 5975 / JCM 20966 / LMG 6465 / NBRC 14845 / NCIMB 13405 / ORS 571)).